Reading from the N-terminus, the 99-residue chain is Acylphosphatase (99 aa).

The 86-residue stretch at 14–99 folds into the Acylphosphatase-like domain; the sequence is AVDVTVTGRV…DQGLRSFGVR (86 aa). Catalysis depends on residues R29 and N47.

The protein belongs to the acylphosphatase family.

It carries out the reaction an acyl phosphate + H2O = a carboxylate + phosphate + H(+). The protein is Acylphosphatase (acyP) of Nocardioides sp. (strain ATCC BAA-499 / JS614).